Consider the following 571-residue polypeptide: Urease subunit alpha (571 aa).

Positions 133 to 571 (GGIDTHVHFI…LPLAQRYFLF (439 aa)) constitute a Urease domain. His-138, His-140, and Lys-221 together coordinate Ni(2+). Lys-221 carries the post-translational modification N6-carboxylysine. A substrate-binding site is contributed by His-223. Ni(2+)-binding residues include His-250 and His-276. His-324 serves as the catalytic Proton donor. Asp-364 is a binding site for Ni(2+).

It belongs to the metallo-dependent hydrolases superfamily. Urease alpha subunit family. As to quaternary structure, heterotrimer of UreA (gamma), UreB (beta) and UreC (alpha) subunits. Three heterotrimers associate to form the active enzyme. Ni cation serves as cofactor. In terms of processing, carboxylation allows a single lysine to coordinate two nickel ions.

Its subcellular location is the cytoplasm. The catalysed reaction is urea + 2 H2O + H(+) = hydrogencarbonate + 2 NH4(+). It participates in nitrogen metabolism; urea degradation; CO(2) and NH(3) from urea (urease route): step 1/1. In Staphylococcus carnosus (strain TM300), this protein is Urease subunit alpha.